The following is a 134-amino-acid chain: Salivary protein 15 Iric-1 (134 aa).

Residues 1–21 (MESFVAMKVVCITVLFVIVAV) form the signal peptide. Asn-22 is a glycosylation site (N-linked (GlcNAc...) asparagine). The interval 48 to 67 (PSYIRNPQKLALELLEICKN) is required for Borrelia OspC-binding. N-linked (GlcNAc...) asparagine glycosylation is found at Asn-91 and Asn-103. The CD4-binding stretch occupies residues 115-134 (GPNGETCAEKSKCVGHIPGC).

Belongs to the salp15 family. In terms of assembly, monomer. Interacts with host CD4. Interacts with host DC-SIGN (CD209). As to quaternary structure, (Microbial infection) Interacts with Borrelia outer surface protein C (OspC). In terms of tissue distribution, expressed in salivary glands. Detected in fed adult female.

The protein resides in the secreted. Its function is as follows. Salivary tick protein that downregulates host immune system by binding to both dendritic cells, and CD4(+) T cells. Specifically binds to the CD4 coreceptor on T cells. This interaction prevents the activation of the Src kinase, Lck, and its downstream substrate Zap-70, and results in deficient activation of PLCgamma1, the repression of calcium fluxes triggered by T-cell antigen receptor (TCR) ligation, and a subsequent reduction in interleukin-2 production. This salivary protein also binds to DC-SIGN (CD209) on dendritic cells (DC) and activates the Raf-1 kinase/MEK signaling pathway that results in down-regulating expression of pro-inflammatory cytokines. Furthermore, it inhibits T cell proliferation induced by DCs. In addition, it inhibits in vitro keratinocyte inflammation induced by Borrelia burgdorferi or by the major outer surface protein (OspC) of Borrelia. In addition, it downregulates chemokines and monocyte chemoattractant protein 1, as well as several antimicrobial peptides such as defensins, cathelicidin, psoriasin, and RNase 7. Apart from its immunomodulatory activities, it is also associated with protection of Borrelia spirochetes from antibody-mediated killing through its binding to OspC. In vivo, tests on different immune disease animal models show promising therapeutic results, e.g., in inhibiting HIV infection, experimental autoimmune encephalomyelitis, transplantation rejection, and asthma. (Microbial infection) Protects Borrelia garinii (strain VSBP) from host complement-mediated killing by binding to the surface of spirochetes and preventing deposition of host C5b-9 membrane attack complexes. Protects Borrelia garinii (strain A87S) from host complement-mediated killing. Functionally, (Microbial infection) Partially protects Borrelia burgdorferi (strains VS215 and B31) from host complement-mediated killing. The polypeptide is Salivary protein 15 Iric-1 (Ixodes ricinus (Common tick)).